A 339-amino-acid chain; its full sequence is Photosystem II assembly lipoprotein Ycf48 (339 aa).

The signal sequence occupies residues 1 to 22 (MVIVKSWQKIFTLLVVLLLCIG). Residue cysteine 23 is the site of N-palmitoyl cysteine attachment. A lipid anchor (S-diacylglycerol cysteine) is attached at cysteine 23.

This sequence belongs to the Ycf48 family. In terms of assembly, part of early PSII assembly complexes which includes D1 (psbA) and PsbI; not found in mature PSII. Binds to the lumenal side of PSII complexes. Interacts with YidC.

Its subcellular location is the cellular thylakoid membrane. Functionally, a factor required for optimal assembly of photosystem II (PSII), acting in the early stages of PSII assembly. Also plays a role in replacement of photodamaged D1 (psbA). Assists YidC in synthesis of chlorophyll-binding proteins. In Nostoc sp. (strain PCC 7120 / SAG 25.82 / UTEX 2576), this protein is Photosystem II assembly lipoprotein Ycf48.